We begin with the raw amino-acid sequence, 288 residues long: Protein PGR (288 aa).

7 helical membrane passes run 1-21, 29-49, 91-111, 123-143, 177-197, 210-230, and 268-288; these read METS…LIAF, LDLS…TAGF, VLCN…LTGW, IVTA…GDTW, LLAA…FGLF, LLVI…DSIL, and VNFV…VYIF.

Belongs to the TMEM19 family. In terms of tissue distribution, expressed in the vasculature of leaves, roots, inflorescences, siliques, anther filaments and sepals. Detected primarily in the phloem tissues, including in the root ans shoot apical meristems.

The protein localises to the cell membrane. In terms of biological role, involved in the glucose-triggered developmental leaf growth process. The polypeptide is Protein PGR (Arabidopsis thaliana (Mouse-ear cress)).